A 664-amino-acid chain; its full sequence is Methionine--tRNA ligase (664 aa).

Positions 15–25 (YYPSGKAHIGH) match the 'HIGH' region motif. Positions 310–314 (KMSKS) match the 'KMSKS' region motif. ATP is bound at residue Lys313. The tRNA-binding domain occupies 563–664 (DFDKIDLRVA…SALPNGAKVK (102 aa)).

Belongs to the class-I aminoacyl-tRNA synthetase family. MetG type 2B subfamily. Homodimer.

Its subcellular location is the cytoplasm. It catalyses the reaction tRNA(Met) + L-methionine + ATP = L-methionyl-tRNA(Met) + AMP + diphosphate. Its function is as follows. Is required not only for elongation of protein synthesis but also for the initiation of all mRNA translation through initiator tRNA(fMet) aminoacylation. In Listeria innocua serovar 6a (strain ATCC BAA-680 / CLIP 11262), this protein is Methionine--tRNA ligase (metG).